The sequence spans 862 residues: Probable disease resistance protein At5g43740 (862 aa).

A coiled-coil region spans residues 24–61; sequence RNYIHMMESNLDALQKTMEELKNGRDDLLGRVSIEEDK. Residues 135–438 enclose the NB-ARC domain; the sequence is MVAQEIIHKV…CEGFINPNRY (304 aa). ATP is bound at residue 178–185; the sequence is GMGGVGKT. LRR repeat units lie at residues 511-532, 533-555, 558-580, and 582-604; these read IVRTMSFTCTQIKKISCRSKCP, NLSTLLILDNRLLVKISNRFFRF, KLVVLDLSANLDLIKLPEEISNL, and SLQYLNISLTGIKSLPVGLKKLR.

This sequence belongs to the disease resistance NB-LRR family.

Probable disease resistance protein. The polypeptide is Probable disease resistance protein At5g43740 (Arabidopsis thaliana (Mouse-ear cress)).